The primary structure comprises 345 residues: Protein-glutamate methylesterase/protein-glutamine glutaminase 2 (345 aa).

The 116-residue stretch at 1–116 folds into the Response regulatory domain; that stretch reads MVVDDSAVVR…KQFLVDASDD (116 aa). Residue aspartate 50 is modified to 4-aspartylphosphate. The 192-residue stretch at 154–345 folds into the CheB-type methylesterase domain; the sequence is LQTTERVVAL…AREIMAQMAG (192 aa). Catalysis depends on residues serine 166, histidine 192, and aspartate 288.

It belongs to the CheB family. Post-translationally, phosphorylated by CheA. Phosphorylation of the N-terminal regulatory domain activates the methylesterase activity.

It is found in the cytoplasm. It carries out the reaction [protein]-L-glutamate 5-O-methyl ester + H2O = L-glutamyl-[protein] + methanol + H(+). The catalysed reaction is L-glutaminyl-[protein] + H2O = L-glutamyl-[protein] + NH4(+). Functionally, involved in chemotaxis. Part of a chemotaxis signal transduction system that modulates chemotaxis in response to various stimuli. Catalyzes the demethylation of specific methylglutamate residues introduced into the chemoreceptors (methyl-accepting chemotaxis proteins or MCP) by CheR. Also mediates the irreversible deamidation of specific glutamine residues to glutamic acid. In Albidiferax ferrireducens (strain ATCC BAA-621 / DSM 15236 / T118) (Rhodoferax ferrireducens), this protein is Protein-glutamate methylesterase/protein-glutamine glutaminase 2.